Consider the following 389-residue polypeptide: Geodin cluster transcriptional coactivator gedD (389 aa).

The HTH iclR-type domain maps to 13–83 (LAWHVQLLAC…QPGQIMHTPL (71 aa)). The segment at residues 43-62 (VRDLAQLCGVSETTLSRVVR) is a DNA-binding region (H-T-H motif).

It localises to the nucleus. Functionally, transcriptional coactivator; part of the gene cluster that mediates the biosynthesis of geodin, an intermediate in the biosynthesis of other natural products. With gedR, coregulates the production of geodin. This is Geodin cluster transcriptional coactivator gedD (gedD) from Aspergillus terreus (strain NIH 2624 / FGSC A1156).